A 199-amino-acid chain; its full sequence is Proteasome subunit beta type-2-B (199 aa).

Position 1 is an N-acetylmethionine (methionine 1).

Belongs to the peptidase T1B family. In terms of assembly, component of the 20S core complex of the 26S proteasome. The 26S proteasome is composed of a core protease (CP), known as the 20S proteasome, capped at one or both ends by the 19S regulatory particle (RP/PA700). The 20S proteasome core is composed of 28 subunits that are arranged in four stacked rings, resulting in a barrel-shaped structure. The two end rings are each formed by seven alpha subunits, and the two central rings are each formed by seven beta subunits. The catalytic chamber with the active sites is on the inside of the barrel. As to expression, ubiquitous low levels, higher expression in siliques and flowers.

It is found in the cytoplasm. The protein localises to the nucleus. Its function is as follows. Non-catalytic component of the proteasome, a multicatalytic proteinase complex which is characterized by its ability to cleave peptides with Arg, Phe, Tyr, Leu, and Glu adjacent to the leaving group at neutral or slightly basic pH. The proteasome has an ATP-dependent proteolytic activity. The chain is Proteasome subunit beta type-2-B (PBD2) from Arabidopsis thaliana (Mouse-ear cress).